The sequence spans 104 residues: SOSS complex subunit C (104 aa).

This sequence belongs to the SOSS-C family. As to quaternary structure, belongs to the multiprotein complex Integrator. Component of the SOSS complex, composed of SOSS-B (SOSS-B1/NABP2 or SOSS-B2/NABP1), SOSS-A/INTS3 and SOSS-C/INIP.

It localises to the nucleus. In terms of biological role, component of the SOSS complex, a multiprotein complex that functions downstream of the MRN complex to promote DNA repair and G2/M checkpoint. The SOSS complex associates with single-stranded DNA at DNA lesions and influences diverse endpoints in the cellular DNA damage response including cell-cycle checkpoint activation, recombinational repair and maintenance of genomic stability. Required for efficient homologous recombination-dependent repair of double-strand breaks (DSBs). The chain is SOSS complex subunit C (INIP) from Taeniopygia guttata (Zebra finch).